The chain runs to 63 residues: Insect toxin TbIT-1 (63 aa).

The region spanning 2–63 (KEGYPVDSRG…VYDNASNKCB (62 aa)) is the LCN-type CS-alpha/beta domain. 4 disulfide bridges follow: Cys12–Cys62, Cys16–Cys38, Cys24–Cys43, and Cys28–Cys45.

Belongs to the long (4 C-C) scorpion toxin superfamily. Sodium channel inhibitor family. Beta subfamily. Expressed by the venom gland.

It localises to the secreted. Functionally, beta toxins bind voltage-independently at site-4 of sodium channels (Nav) and shift the voltage of activation toward more negative potentials thereby affecting sodium channel activation and promoting spontaneous and repetitive firing. This toxin is only active against insects. This chain is Insect toxin TbIT-1, found in Tityus bahiensis (Brazilian scorpion).